A 122-amino-acid polypeptide reads, in one-letter code: Large ribosomal subunit protein bL12 (122 aa).

It belongs to the bacterial ribosomal protein bL12 family. Homodimer. Part of the ribosomal stalk of the 50S ribosomal subunit. Forms a multimeric L10(L12)X complex, where L10 forms an elongated spine to which 2 to 4 L12 dimers bind in a sequential fashion. Binds GTP-bound translation factors.

Forms part of the ribosomal stalk which helps the ribosome interact with GTP-bound translation factors. Is thus essential for accurate translation. The chain is Large ribosomal subunit protein bL12 from Xylella fastidiosa (strain M23).